Consider the following 209-residue polypeptide: Large ribosomal subunit protein uL3 (209 aa).

The interval 127–147 (YSRGPMGHGSKSHRVAGARSA) is disordered.

The protein belongs to the universal ribosomal protein uL3 family. In terms of assembly, part of the 50S ribosomal subunit. Forms a cluster with proteins L14 and L19.

Functionally, one of the primary rRNA binding proteins, it binds directly near the 3'-end of the 23S rRNA, where it nucleates assembly of the 50S subunit. The chain is Large ribosomal subunit protein uL3 from Finegoldia magna (strain ATCC 29328 / DSM 20472 / WAL 2508) (Peptostreptococcus magnus).